The primary structure comprises 348 residues: Guanosine ABC transporter permease protein NupP (348 aa).

A run of 9 helical transmembrane segments spans residues 8 to 28, 61 to 81, 85 to 105, 107 to 127, 136 to 156, 189 to 209, 237 to 257, 277 to 297, and 320 to 340; these read LLVP…IMLV, YILS…NIGV, LLVG…PAYI, LPLA…IPGI, EVIV…YIIS, LHLG…IINK, IMTS…MEGL, IAVA…ACLL, and IVIA…FVMG.

Belongs to the binding-protein-dependent transport system permease family. The complex is composed of two ATP-binding proteins (NupO), two transmembrane proteins (NupP and NupQ) and a solute-binding protein (NupN).

Its subcellular location is the cell membrane. Part of an ABC transporter complex involved in the uptake of guanosine. Responsible for the translocation of the substrate across the membrane. May be a nucleoside transporter of broad specificity but with various affinities for different substrates. The sequence is that of Guanosine ABC transporter permease protein NupP from Bacillus subtilis (strain 168).